We begin with the raw amino-acid sequence, 362 residues long: Mitochondrial glycine transporter (362 aa).

3 Solcar repeats span residues 22-108, 132-236, and 269-354; these read PDAT…MRTS, LTAM…FKND, and RSSI…LIKS. A run of 6 helical transmembrane segments spans residues 28–53, 83–109, 138–163, 211–234, 273–299, and 329–347; these read LLAGAIAGLVSAVTLQPFDLLKTRLQ, GTLPSTLRTSIGAGLYFTTLSKMRTSW, LTTGFIARGIVGYITMPITIIKTRFE, GSVATLARDCPYAGLYVLTYEAFK, INSTAAVLAASTCTTITAPFDAIKTRL, and GLSLRLGRKGISAGISWCI.

It belongs to the mitochondrial carrier (TC 2.A.29) family. SLC25A38 subfamily.

The protein localises to the mitochondrion inner membrane. The enzyme catalyses glycine(in) = glycine(out). Mitochondrial glycine transporter that imports glycine into the mitochondrial matrix. Plays an important role in providing glycine for the first enzymatic step in heme biosynthesis, the condensation of glycine with succinyl-CoA to produce 5-aminolevulinate (ALA) in the mitochondrial matrix. The sequence is that of Mitochondrial glycine transporter from Candida albicans (strain SC5314 / ATCC MYA-2876) (Yeast).